The following is a 237-amino-acid chain: LexA repressor (237 aa).

Residues F26–T46 constitute a DNA-binding region (H-T-H motif). Residues S158 and K196 each act as for autocatalytic cleavage activity in the active site.

This sequence belongs to the peptidase S24 family. As to quaternary structure, homodimer.

The catalysed reaction is Hydrolysis of Ala-|-Gly bond in repressor LexA.. Functionally, represses a number of genes involved in the response to DNA damage (SOS response), including recA and lexA. In the presence of single-stranded DNA, RecA interacts with LexA causing an autocatalytic cleavage which disrupts the DNA-binding part of LexA, leading to derepression of the SOS regulon and eventually DNA repair. In Rhodopseudomonas palustris (strain BisA53), this protein is LexA repressor.